A 414-amino-acid polypeptide reads, in one-letter code: Succinylornithine transaminase (414 aa).

An N6-(pyridoxal phosphate)lysine modification is found at K260.

Belongs to the class-III pyridoxal-phosphate-dependent aminotransferase family. AstC subfamily. It depends on pyridoxal 5'-phosphate as a cofactor.

The catalysed reaction is N(2)-succinyl-L-ornithine + 2-oxoglutarate = N-succinyl-L-glutamate 5-semialdehyde + L-glutamate. The protein operates within amino-acid degradation; L-arginine degradation via AST pathway; L-glutamate and succinate from L-arginine: step 3/5. Catalyzes the transamination of N(2)-succinylornithine and alpha-ketoglutarate into N(2)-succinylglutamate semialdehyde and glutamate. Can also act as an acetylornithine aminotransferase. The polypeptide is Succinylornithine transaminase (Yersinia pseudotuberculosis serotype O:1b (strain IP 31758)).